A 186-amino-acid chain; its full sequence is Elongation factor P (186 aa).

Lysine 33 bears the N6-(3,6-diaminohexanoyl)-5-hydroxylysine mark.

The protein belongs to the elongation factor P family. May be beta-lysylated on the epsilon-amino group of Lys-33 by the combined action of EpmA and EpmB, and then hydroxylated on the C5 position of the same residue by EpmC (if this protein is present). Lysylation is critical for the stimulatory effect of EF-P on peptide-bond formation. The lysylation moiety may extend toward the peptidyltransferase center and stabilize the terminal 3-CCA end of the tRNA. Hydroxylation of the C5 position on Lys-33 may allow additional potential stabilizing hydrogen-bond interactions with the P-tRNA.

It localises to the cytoplasm. The protein operates within protein biosynthesis; polypeptide chain elongation. In terms of biological role, involved in peptide bond synthesis. Alleviates ribosome stalling that occurs when 3 or more consecutive Pro residues or the sequence PPG is present in a protein, possibly by augmenting the peptidyl transferase activity of the ribosome. Modification of Lys-33 is required for alleviation. The polypeptide is Elongation factor P (Acidithiobacillus ferrooxidans (strain ATCC 23270 / DSM 14882 / CIP 104768 / NCIMB 8455) (Ferrobacillus ferrooxidans (strain ATCC 23270))).